Here is a 554-residue protein sequence, read N- to C-terminus: Movement protein Hsp70h (554 aa).

Belongs to the heat shock protein 70 family.

Its subcellular location is the virion. Transports viral genome to neighboring plant cells directly through plasmosdesmata, without any budding. The movement protein allows efficient cell to cell propagation, by bypassing the host cell wall barrier. Two movement proteins, p6, Hsp70h and three structural proteins, CP, CPm, and P64 are essential for cell-cell movement. Also plays a role in virion formation. Together with CPm and p64, encapsidates the 5'-terminal portion of the viral genome. The sequence is that of Movement protein Hsp70h from Lettuce infectious yellows virus (isolate United States/92) (LIYV).